A 642-amino-acid polypeptide reads, in one-letter code: MGKIIGIDLGTTNSCVAVLENGQPKVIENSEGARTTPSVVAYMEDGEILVGAPAKRQAVTNAKNTIFASKRLIGRRFEEKEVQKDIDLMPFSIVKADNGDAWIDVRGKKLAPPQISAEVLRKMKKTAEDYLGEEVTEAVITVPAYFNDSQRQATKDAGRIAGLEVKRIINEPTAAALAFGMDKSEKGDKKIAVYDLGGGTFDISIIEIADVDGEKQFEVLATNGDTFLGGEDFDQRLIDYIVTEFKKEQGVDLKNDVMALQRLKEAAEKAKIELSSGQQTEINLPYITMDATGPKHLTMKITRAKFESLVDELIERSIEPCRVAIKDAGLKVSDIDDVILVGGQSRMPKVQEAVKTFFGKEPRRDVNPDEAVAVGAAIQGSVLSGERKDLLLLDVTPLSLGIETMGGIMTKLIQKNTTIPTKATQVFSTADDNQTAVTIHVLQGEREKAAANKSLGQFNLSDIPPAPRGLPQIEVTFDIDANGILHVSAKDKATGKQANITIQASSGLSEAEIEKMVRDAELNAEEDKKLAELVQARNQAEGLIHSVKKSLADYGDKIGSDEKARIEAAIKDAEEAVKGEDKAAIEAKSEELAKASQKLGEIMYAQAQAESQAAGEGQPDAGKKDDGNVVDAEFEEVKKDKQ.

Thr200 is subject to Phosphothreonine; by autocatalysis. Positions 608–618 (QAESQAAGEGQ) are enriched in low complexity. Residues 608–642 (QAESQAAGEGQPDAGKKDDGNVVDAEFEEVKKDKQ) form a disordered region.

Belongs to the heat shock protein 70 family.

Functionally, acts as a chaperone. This chain is Chaperone protein DnaK, found in Laribacter hongkongensis (strain HLHK9).